The chain runs to 30 residues: Trypsin inhibitor 1 (30 aa).

Cystine bridges form between C4-C21, C11-C23, and C17-C29.

This sequence belongs to the protease inhibitor I7 (squash-type serine protease inhibitor) family.

It is found in the secreted. Its function is as follows. Inhibits trypsin. The sequence is that of Trypsin inhibitor 1 from Momordica charantia (Bitter gourd).